A 269-amino-acid chain; its full sequence is MPELPEVEAIRRGIEPHLVGATILHAVVRNGRLRWPVSEEIYRLSDQPVLSVQRRAKYLLLELPEGWIIIHLGMSGSLRILPEELPPEKHDHVDLVMSNGKVLRYTDPRRFGAWLWTKELEGHNVLAHLGPEPLSDDFNGEYLHQKCAKKKTAIKPWLMDNKLVVGVGNIYASESLFAAGIHPDRLASSLSLAECELLARVIKAVLLRSIEQGGTTLKDFLQSDGKPGYFAQELQVYGRKGEPCRVCGTPIVATKHAQRATFYCRQCQK.

The active-site Schiff-base intermediate with DNA is the Pro-2. The Proton donor role is filled by Glu-3. Lys-57 acts as the Proton donor; for beta-elimination activity in catalysis. Positions 90, 109, and 150 each coordinate DNA. The segment at 235 to 269 adopts an FPG-type zinc-finger fold; it reads QVYGRKGEPCRVCGTPIVATKHAQRATFYCRQCQK. Catalysis depends on Arg-259, which acts as the Proton donor; for delta-elimination activity.

The protein belongs to the FPG family. Monomer. Zn(2+) is required as a cofactor.

It carries out the reaction Hydrolysis of DNA containing ring-opened 7-methylguanine residues, releasing 2,6-diamino-4-hydroxy-5-(N-methyl)formamidopyrimidine.. It catalyses the reaction 2'-deoxyribonucleotide-(2'-deoxyribose 5'-phosphate)-2'-deoxyribonucleotide-DNA = a 3'-end 2'-deoxyribonucleotide-(2,3-dehydro-2,3-deoxyribose 5'-phosphate)-DNA + a 5'-end 5'-phospho-2'-deoxyribonucleoside-DNA + H(+). Involved in base excision repair of DNA damaged by oxidation or by mutagenic agents. Acts as a DNA glycosylase that recognizes and removes damaged bases. Has a preference for oxidized purines, such as 7,8-dihydro-8-oxoguanine (8-oxoG). Has AP (apurinic/apyrimidinic) lyase activity and introduces nicks in the DNA strand. Cleaves the DNA backbone by beta-delta elimination to generate a single-strand break at the site of the removed base with both 3'- and 5'-phosphates. This chain is Formamidopyrimidine-DNA glycosylase, found in Escherichia coli O6:K15:H31 (strain 536 / UPEC).